A 330-amino-acid polypeptide reads, in one-letter code: Dof zinc finger protein DOF2.4 (330 aa).

The span at 14 to 25 shows a compositional bias: polar residues; the sequence is NWQQAPPSNYNH. The segment at 14 to 70 is disordered; sequence NWQQAPPSNYNHDGTGASANGGHVLRPQLQPQQQPQQQPHPNGSGGGGGGGGGSIRA. The segment covering 40 to 55 has biased composition (low complexity); sequence PQLQPQQQPQQQPHPN. Gly residues predominate over residues 56 to 68; that stretch reads GSGGGGGGGGGSI. The segment at 89–143 adopts a Dof-type zinc-finger fold; it reads LKCPRCESTNTKFCYFNNYSLTQPRHFCKTCRRYWTRGGALRNVPVGGGCRRNRR. Residues cysteine 91, cysteine 94, cysteine 116, and cysteine 119 each contribute to the Zn(2+) site. Disordered stretches follow at residues 133–165 and 255–276; these read PVGG…SFSS and QQSS…SANG. Positions 146–165 are enriched in low complexity; it reads SNSNNNNNSTATSNNTSFSS. A compositionally biased stretch (polar residues) spans 265 to 276; it reads EDSSNPNPSANG.

As to expression, specific to the vascular tissues. The PEAR proteins (e.g. DOF2.4, DOF5.1, DOF3.2, DOF1.1, DOF5.6 and DOF5.3) form a short-range concentration gradient that peaks at protophloem sieve elements (PSE).

It localises to the nucleus. It is found in the symplast. Functionally, transcription factor that binds specifically to a 5'-AA[AG]G-3' consensus core sequence. Probably involved in early processes for vascular development. The PEAR proteins (e.g. DOF2.4, DOF5.1, DOF3.2, DOF1.1, DOF5.6 and DOF5.3) activate gene expression that promotes radial growth of protophloem sieve elements. Triggers the transcription of HD-ZIP III genes, especially in the central domain of vascular tissue. The chain is Dof zinc finger protein DOF2.4 from Arabidopsis thaliana (Mouse-ear cress).